The sequence spans 189 residues: Inner membrane-spanning protein YciB (189 aa).

A run of 5 helical transmembrane segments spans residues 4–24 (FFEF…DIYI), 53–73 (ITFG…DDVF), 76–96 (WKVT…QFFY), 121–141 (MAWA…AFSL), and 149–169 (FKVF…GLYI).

Belongs to the YciB family.

It localises to the cell inner membrane. Plays a role in cell envelope biogenesis, maintenance of cell envelope integrity and membrane homeostasis. The sequence is that of Inner membrane-spanning protein YciB from Psychromonas ingrahamii (strain DSM 17664 / CCUG 51855 / 37).